Reading from the N-terminus, the 253-residue chain is uncharacterized protein (253 aa).

The protein belongs to the A.longa ORF167/ORF288 family.

It is found in the plastid. This is an uncharacterized protein from Euglena longa (Euglenophycean alga).